The chain runs to 199 residues: Peroxynitrite isomerase (199 aa).

The short motif at 21–27 is the GXWXGXG element; the sequence is GEWEGRG. Histidine 190 contributes to the heme b binding site.

This sequence belongs to the nitrobindin family. In terms of assembly, homodimer. Heme b is required as a cofactor.

It carries out the reaction peroxynitrite = nitrate. The protein operates within nitrogen metabolism. In terms of biological role, heme-binding protein able to scavenge peroxynitrite and to protect free L-tyrosine against peroxynitrite-mediated nitration, by acting as a peroxynitrite isomerase that converts peroxynitrite to nitrate. Therefore, this protein likely plays a role in peroxynitrite sensing and in the detoxification of reactive nitrogen and oxygen species (RNS and ROS, respectively). Is able to bind nitric oxide (NO) in vitro, but may act as a sensor of peroxynitrite levels in vivo. In Paenarthrobacter aurescens (strain TC1), this protein is Peroxynitrite isomerase.